Consider the following 569-residue polypeptide: Oxygen-dependent choline dehydrogenase (569 aa).

9 to 38 (DYVIIGGGSAGSVLGNRLSEDKDKEVLVLE) serves as a coordination point for FAD. H475 serves as the catalytic Proton acceptor.

This sequence belongs to the GMC oxidoreductase family. It depends on FAD as a cofactor.

It catalyses the reaction choline + A = betaine aldehyde + AH2. The enzyme catalyses betaine aldehyde + NAD(+) + H2O = glycine betaine + NADH + 2 H(+). Its pathway is amine and polyamine biosynthesis; betaine biosynthesis via choline pathway; betaine aldehyde from choline (cytochrome c reductase route): step 1/1. Functionally, involved in the biosynthesis of the osmoprotectant glycine betaine. Catalyzes the oxidation of choline to betaine aldehyde and betaine aldehyde to glycine betaine at the same rate. The protein is Oxygen-dependent choline dehydrogenase of Staphylococcus aureus (strain MSSA476).